We begin with the raw amino-acid sequence, 287 residues long: Glutamate racemase (287 aa).

Substrate contacts are provided by residues 32-33 (DS) and 64-65 (YG). Catalysis depends on C96, which acts as the Proton donor/acceptor. 97-98 (NT) serves as a coordination point for substrate. C208 serves as the catalytic Proton donor/acceptor. Residue 209–210 (TH) coordinates substrate.

This sequence belongs to the aspartate/glutamate racemases family.

The catalysed reaction is L-glutamate = D-glutamate. It functions in the pathway cell wall biogenesis; peptidoglycan biosynthesis. Provides the (R)-glutamate required for cell wall biosynthesis. This is Glutamate racemase from Yersinia enterocolitica serotype O:8 / biotype 1B (strain NCTC 13174 / 8081).